A 309-amino-acid polypeptide reads, in one-letter code: MGINSDVSRPRARSTPNMSKKFQTIGLIGKPHHQGTNQTIEKLHLWLTAQGYTVLVEERVSAELEIEFQAVDLVEIGERCDLAIVVGGDGNMLGAARVLARYDVAVIGVNRGNLGFLTDLPPDGFETQLAQVLGGEFETEHRFLLEAEVHRHGMIKASNTAVNEAVLHPGKIAHMIQFEVYIDEQFMYSQRADGMIVSTPTGSTAYSLSAGGAILTPNLQALILVPMFPHTLSCRPIVVDACSTIKLVVSPDNGENLEVSCDGHVHLSVLPGDEIIIRRSQQRLMLIHPKGHNYFHVLRNKLGWGSKLF.

Aspartate 89 acts as the Proton acceptor in catalysis. NAD(+) contacts are provided by residues 89–90 (DG), 163–164 (NE), histidine 174, arginine 191, aspartate 193, and 204–209 (TAYSLS).

The protein belongs to the NAD kinase family. A divalent metal cation is required as a cofactor.

It is found in the cytoplasm. It catalyses the reaction NAD(+) + ATP = ADP + NADP(+) + H(+). Functionally, involved in the regulation of the intracellular balance of NAD and NADP, and is a key enzyme in the biosynthesis of NADP. Catalyzes specifically the phosphorylation on 2'-hydroxyl of the adenosine moiety of NAD to yield NADP. The protein is NAD kinase of Shewanella denitrificans (strain OS217 / ATCC BAA-1090 / DSM 15013).